The primary structure comprises 259 residues: MTRREDGRLDDELRPLVITRGFTEHPAGSVLIEFGHTKVMCTASVTEGVPRWRKGSGLGWLTAEYAMLPSATHTRSDRESVKGRLSGRTQEISRLIGRSLRACIDLAALGENTIAVDCDVLQADGGTRTAAITGAFVALADAVTYLSAAGKLSDPRPLSCAIAAVSVGVVDGRIRVDLPYEEDARAEVDMNVVATDTGTLVEVQGTGEGATFPRSTLDKLLDAALAACDKLFAAQREALKLPYPGVLPEGPPPPKVFGS.

Residues arginine 88 and 126-128 (GTR) contribute to the phosphate site.

The protein belongs to the RNase PH family. In terms of assembly, homohexameric ring arranged as a trimer of dimers.

The enzyme catalyses tRNA(n+1) + phosphate = tRNA(n) + a ribonucleoside 5'-diphosphate. In terms of biological role, phosphorolytic 3'-5' exoribonuclease that plays an important role in tRNA 3'-end maturation. Removes nucleotide residues following the 3'-CCA terminus of tRNAs; can also add nucleotides to the ends of RNA molecules by using nucleoside diphosphates as substrates, but this may not be physiologically important. Probably plays a role in initiation of 16S rRNA degradation (leading to ribosome degradation) during starvation. This is Ribonuclease PH from Mycobacterium avium (strain 104).